Here is a 250-residue protein sequence, read N- to C-terminus: 5-oxoprolinase subunit A (250 aa).

Belongs to the LamB/PxpA family. As to quaternary structure, forms a complex composed of PxpA, PxpB and PxpC.

It catalyses the reaction 5-oxo-L-proline + ATP + 2 H2O = L-glutamate + ADP + phosphate + H(+). In terms of biological role, catalyzes the cleavage of 5-oxoproline to form L-glutamate coupled to the hydrolysis of ATP to ADP and inorganic phosphate. This Paraburkholderia phymatum (strain DSM 17167 / CIP 108236 / LMG 21445 / STM815) (Burkholderia phymatum) protein is 5-oxoprolinase subunit A.